The chain runs to 211 residues: Imidazole glycerol phosphate synthase subunit HisH (211 aa).

A Glutamine amidotransferase type-1 domain is found at 3–211; sequence VIAVIDYDMG…VNQIRVKAIA (209 aa). Cys-81 acts as the Nucleophile in catalysis. Catalysis depends on residues His-186 and Glu-188.

As to quaternary structure, heterodimer of HisH and HisF.

It localises to the cytoplasm. It catalyses the reaction 5-[(5-phospho-1-deoxy-D-ribulos-1-ylimino)methylamino]-1-(5-phospho-beta-D-ribosyl)imidazole-4-carboxamide + L-glutamine = D-erythro-1-(imidazol-4-yl)glycerol 3-phosphate + 5-amino-1-(5-phospho-beta-D-ribosyl)imidazole-4-carboxamide + L-glutamate + H(+). The catalysed reaction is L-glutamine + H2O = L-glutamate + NH4(+). Its pathway is amino-acid biosynthesis; L-histidine biosynthesis; L-histidine from 5-phospho-alpha-D-ribose 1-diphosphate: step 5/9. IGPS catalyzes the conversion of PRFAR and glutamine to IGP, AICAR and glutamate. The HisH subunit catalyzes the hydrolysis of glutamine to glutamate and ammonia as part of the synthesis of IGP and AICAR. The resulting ammonia molecule is channeled to the active site of HisF. In Gloeothece citriformis (strain PCC 7424) (Cyanothece sp. (strain PCC 7424)), this protein is Imidazole glycerol phosphate synthase subunit HisH.